We begin with the raw amino-acid sequence, 219 residues long: Elongation factor Ts (219 aa).

An involved in Mg(2+) ion dislocation from EF-Tu region spans residues 83–86 (TDFV).

Belongs to the EF-Ts family.

It localises to the cytoplasm. Associates with the EF-Tu.GDP complex and induces the exchange of GDP to GTP. It remains bound to the aminoacyl-tRNA.EF-Tu.GTP complex up to the GTP hydrolysis stage on the ribosome. The protein is Elongation factor Ts of Synechococcus sp. (strain WH7803).